We begin with the raw amino-acid sequence, 241 residues long: Large ribosomal subunit protein uL30 (241 aa).

Positions 1–25 (MASTLKPETLVKKSKAQQKTAEERA) are disordered.

This sequence belongs to the universal ribosomal protein uL30 family.

The protein is Large ribosomal subunit protein uL30 (RPL7) of Debaryomyces hansenii (strain ATCC 36239 / CBS 767 / BCRC 21394 / JCM 1990 / NBRC 0083 / IGC 2968) (Yeast).